Reading from the N-terminus, the 417-residue chain is Gamma-glutamyl phosphate reductase (417 aa).

It belongs to the gamma-glutamyl phosphate reductase family.

It is found in the cytoplasm. The catalysed reaction is L-glutamate 5-semialdehyde + phosphate + NADP(+) = L-glutamyl 5-phosphate + NADPH + H(+). Its pathway is amino-acid biosynthesis; L-proline biosynthesis; L-glutamate 5-semialdehyde from L-glutamate: step 2/2. Catalyzes the NADPH-dependent reduction of L-glutamate 5-phosphate into L-glutamate 5-semialdehyde and phosphate. The product spontaneously undergoes cyclization to form 1-pyrroline-5-carboxylate. In Sodalis glossinidius (strain morsitans), this protein is Gamma-glutamyl phosphate reductase.